Reading from the N-terminus, the 219-residue chain is Sugar fermentation stimulation protein homolog (219 aa).

Belongs to the SfsA family.

The sequence is that of Sugar fermentation stimulation protein homolog from Archaeoglobus fulgidus (strain ATCC 49558 / DSM 4304 / JCM 9628 / NBRC 100126 / VC-16).